The sequence spans 307 residues: Acetyl-coenzyme A carboxylase carboxyl transferase subunit beta (307 aa).

Residues 25–294 (LWIKDPESGE…TEENGSRRLP (270 aa)) enclose the CoA carboxyltransferase N-terminal domain.

Belongs to the AccD/PCCB family. In terms of assembly, acetyl-CoA carboxylase is a heterohexamer composed of biotin carboxyl carrier protein (AccB), biotin carboxylase (AccC) and two subunits each of ACCase subunit alpha (AccA) and ACCase subunit beta (AccD).

It is found in the cytoplasm. The enzyme catalyses N(6)-carboxybiotinyl-L-lysyl-[protein] + acetyl-CoA = N(6)-biotinyl-L-lysyl-[protein] + malonyl-CoA. Its pathway is lipid metabolism; malonyl-CoA biosynthesis; malonyl-CoA from acetyl-CoA: step 1/1. Its function is as follows. Component of the acetyl coenzyme A carboxylase (ACC) complex. Biotin carboxylase (BC) catalyzes the carboxylation of biotin on its carrier protein (BCCP) and then the CO(2) group is transferred by the transcarboxylase to acetyl-CoA to form malonyl-CoA. This is Acetyl-coenzyme A carboxylase carboxyl transferase subunit beta from Chelativorans sp. (strain BNC1).